Here is a 122-residue protein sequence, read N- to C-terminus: Selenoprotein H (122 aa).

K20 carries the N6-acetyllysine modification. A cross-link (cysteinyl-selenocysteine (Cys-Sec); redox-active) is located at residues C41–U44. A non-standard amino acid (selenocysteine) is located at residue U44.

The protein belongs to the SelWTH family.

Functionally, may be involved in a redox-related process. The polypeptide is Selenoprotein H (Macaca fascicularis (Crab-eating macaque)).